A 537-amino-acid chain; its full sequence is Putative cysteine ligase BshC (537 aa).

A coiled-coil region spans residues 422–450; the sequence is IEKVEGMIEQQRRLNKDLLDEVAGNQNNI.

It belongs to the BshC family.

Its function is as follows. Involved in bacillithiol (BSH) biosynthesis. May catalyze the last step of the pathway, the addition of cysteine to glucosamine malate (GlcN-Mal) to generate BSH. The polypeptide is Putative cysteine ligase BshC (Staphylococcus aureus (strain USA300)).